Reading from the N-terminus, the 141-residue chain is MAIILGADAHGNALKELIKSFLQEESYDIIDVTDINSDFIDNTLAVAKAVNEAEGRLGIMVDAYGAGPFMVATKLKGMVAAEVSDERSAYMTRGHNNARMITMGAEIVGPELAKNIAKGFVTGPYDGGRHQIRVDMLNKMA.

It belongs to the LacAB/RpiB family. As to quaternary structure, heteromultimeric protein consisting of LacA and LacB.

It catalyses the reaction aldehydo-D-galactose 6-phosphate = keto-D-tagatose 6-phosphate. Its pathway is carbohydrate metabolism; D-galactose 6-phosphate degradation; D-tagatose 6-phosphate from D-galactose 6-phosphate: step 1/1. This is Galactose-6-phosphate isomerase subunit LacA 1 from Streptococcus pyogenes serotype M18 (strain MGAS8232).